We begin with the raw amino-acid sequence, 1165 residues long: Serine/threonine-protein kinase/endoribonuclease ireA (1165 aa).

A signal peptide spans 1-27 (MRWRLPGARTTLPASVALLLLPILVAP). Topologically, residues 28 to 504 (QQLQEHDDLP…STIIRKGWDN (477 aa)) are lumenal. Asn-152 carries an N-linked (GlcNAc...) asparagine glycan. The helical transmembrane segment at 505–525 (AVDIFVTILLLFFGAFIYFNS) threads the bilayer. Residues 526–1165 (HNIQELAKQK…RFKRYFTPVE (640 aa)) lie on the Cytoplasmic side of the membrane. The tract at residues 547–668 (QPPLSTPSTP…SEGESKDQAD (122 aa)) is disordered. 2 stretches are compositionally biased toward basic and acidic residues: residues 591-600 (ATPKPKRDRS) and 611-620 (KIREPSRGPD). Residues 637–655 (PKKKARRGRRGGKNHRRGK) are compositionally biased toward basic residues. Over residues 656 to 668 (KPDSEGESKDQAD) the composition is skewed to basic and acidic residues. Residues 711–1026 (VFSDVVLGHG…ASAVLMHPFF (316 aa)) enclose the Protein kinase domain. ATP-binding positions include 717 to 725 (LGHGSHGTV) and Lys-739. Residue Asp-832 is the Proton acceptor of the active site. Positions 899 to 919 (AIQGGESQHTESSEPAVVDPQ) are disordered. The region spanning 1029–1163 (PSDRLSFLCD…IDRFKRYFTP (135 aa)) is the KEN domain.

Belongs to the protein kinase superfamily. Ser/Thr protein kinase family. In terms of assembly, homodimer; in response to the accumulation of unfolded proteins. The cofactor is Mg(2+). Autophosphorylated mainly on serine residues.

Its subcellular location is the membrane. It catalyses the reaction L-seryl-[protein] + ATP = O-phospho-L-seryl-[protein] + ADP + H(+). It carries out the reaction L-threonyl-[protein] + ATP = O-phospho-L-threonyl-[protein] + ADP + H(+). 8-formyl-7-hydroxy-4-methylcoumarin inhibits the endonuclease activity and prebvent the splicing if the hacA mRNA. The kinase domain is activated by trans-autophosphorylation. Kinase activity is required for activation of the endoribonuclease domain. In terms of biological role, senses unfolded proteins in the lumen of the endoplasmic reticulum (ER) via its N-terminal domain which leads to enzyme auto-activation. The active endoribonuclease domain responds by cleaving an intron from the downstream cytoplasmic mRNA hacA, allowing for the translation of a transcription factor that coordinates a series of adaptive responses that are collectively known as the unfolded protein response (UPR). In the absence of ER stress, ireA controls dual signaling circuits that are both hacA-dependent and hacA-independent and which contribute to the expression of traits that are essential for virulence. The sequence is that of Serine/threonine-protein kinase/endoribonuclease ireA from Aspergillus fumigatus (strain ATCC MYA-4609 / CBS 101355 / FGSC A1100 / Af293) (Neosartorya fumigata).